The sequence spans 124 residues: Small ribosomal subunit protein uS12 (124 aa).

A disordered region spans residues 105-124 (SGVNDRRQGRSKYGAKRPKS). Positions 113–124 (GRSKYGAKRPKS) are enriched in basic residues.

The protein belongs to the universal ribosomal protein uS12 family. In terms of assembly, part of the 30S ribosomal subunit. Contacts proteins S8 and S17. May interact with IF1 in the 30S initiation complex.

In terms of biological role, with S4 and S5 plays an important role in translational accuracy. Interacts with and stabilizes bases of the 16S rRNA that are involved in tRNA selection in the A site and with the mRNA backbone. Located at the interface of the 30S and 50S subunits, it traverses the body of the 30S subunit contacting proteins on the other side and probably holding the rRNA structure together. The combined cluster of proteins S8, S12 and S17 appears to hold together the shoulder and platform of the 30S subunit. This chain is Small ribosomal subunit protein uS12, found in Idiomarina loihiensis (strain ATCC BAA-735 / DSM 15497 / L2-TR).